The primary structure comprises 286 residues: Aspartate/glutamate leucyltransferase (286 aa).

It belongs to the R-transferase family. Bpt subfamily.

It localises to the cytoplasm. It catalyses the reaction N-terminal L-glutamyl-[protein] + L-leucyl-tRNA(Leu) = N-terminal L-leucyl-L-glutamyl-[protein] + tRNA(Leu) + H(+). It carries out the reaction N-terminal L-aspartyl-[protein] + L-leucyl-tRNA(Leu) = N-terminal L-leucyl-L-aspartyl-[protein] + tRNA(Leu) + H(+). Its function is as follows. Functions in the N-end rule pathway of protein degradation where it conjugates Leu from its aminoacyl-tRNA to the N-termini of proteins containing an N-terminal aspartate or glutamate. This chain is Aspartate/glutamate leucyltransferase, found in Jannaschia sp. (strain CCS1).